Here is a 313-residue protein sequence, read N- to C-terminus: Solute carrier family 35 member E3 (313 aa).

A run of 9 helical transmembrane segments spans residues 17 to 37, 40 to 60, 77 to 97, 126 to 143, 153 to 173, 187 to 206, 225 to 245, 252 to 272, and 275 to 295; these read GLLF…WIYV, GFPN…GLYI, LLLL…SLQN, FSTR…GVIL, FLGM…QVWV, LLYY…VPFF, LMVL…YWII, TYNM…YVLF, and PLSI…LAYT.

This sequence belongs to the TPT transporter family. SLC35E subfamily.

It localises to the membrane. Its function is as follows. Putative transporter. This is Solute carrier family 35 member E3 (SLC35E3) from Homo sapiens (Human).